The primary structure comprises 404 residues: Probable tRNA sulfurtransferase (404 aa).

The 106-residue stretch at 60 to 165 (QPIVEALKLV…DEAAYISYEE (106 aa)) folds into the THUMP domain. ATP is bound by residues 183-184 (ML), 208-209 (HF), Arg265, Gly287, and Gln296.

Belongs to the ThiI family.

Its subcellular location is the cytoplasm. The catalysed reaction is [ThiI sulfur-carrier protein]-S-sulfanyl-L-cysteine + a uridine in tRNA + 2 reduced [2Fe-2S]-[ferredoxin] + ATP + H(+) = [ThiI sulfur-carrier protein]-L-cysteine + a 4-thiouridine in tRNA + 2 oxidized [2Fe-2S]-[ferredoxin] + AMP + diphosphate. It carries out the reaction [ThiS sulfur-carrier protein]-C-terminal Gly-Gly-AMP + S-sulfanyl-L-cysteinyl-[cysteine desulfurase] + AH2 = [ThiS sulfur-carrier protein]-C-terminal-Gly-aminoethanethioate + L-cysteinyl-[cysteine desulfurase] + A + AMP + 2 H(+). Its pathway is cofactor biosynthesis; thiamine diphosphate biosynthesis. Its function is as follows. Catalyzes the ATP-dependent transfer of a sulfur to tRNA to produce 4-thiouridine in position 8 of tRNAs, which functions as a near-UV photosensor. Also catalyzes the transfer of sulfur to the sulfur carrier protein ThiS, forming ThiS-thiocarboxylate. This is a step in the synthesis of thiazole, in the thiamine biosynthesis pathway. The sulfur is donated as persulfide by IscS. This is Probable tRNA sulfurtransferase from Streptococcus pyogenes serotype M2 (strain MGAS10270).